Here is a 201-residue protein sequence, read N- to C-terminus: Ribosome maturation factor RimM (201 aa).

Residues 94–168 (EDEYYHADLI…RLVADPPLGL (75 aa)) enclose the PRC barrel domain. The segment at 164 to 201 (PPLGLLDDTRPPAGVEGEVEEDPGVGIDEDGDGKGGAS) is disordered. Positions 180-194 (GEVEEDPGVGIDEDG) are enriched in acidic residues.

The protein belongs to the RimM family. Binds ribosomal protein uS19.

It localises to the cytoplasm. An accessory protein needed during the final step in the assembly of 30S ribosomal subunit, possibly for assembly of the head region. Essential for efficient processing of 16S rRNA. May be needed both before and after RbfA during the maturation of 16S rRNA. It has affinity for free ribosomal 30S subunits but not for 70S ribosomes. This Rhodospirillum rubrum (strain ATCC 11170 / ATH 1.1.1 / DSM 467 / LMG 4362 / NCIMB 8255 / S1) protein is Ribosome maturation factor RimM.